We begin with the raw amino-acid sequence, 262 residues long: Bacteriorhodopsin (262 aa).

The propeptide occupies 1–13 (MLELLPTAVEGVS). Gln-14 is modified (pyrrolidone carboxylic acid). The Extracellular segment spans residues 14-22 (QAQITGRPE). Residues 23 to 42 (WIWLALGTALMGLGTLYFLV) traverse the membrane as a helical segment. The Cytoplasmic segment spans residues 43-56 (KGMGVSDPDAKKFY). A helical transmembrane segment spans residues 57-75 (AITTLVPAIAFTMYLSMLL). At 76–92 (GYGLTMVPFGGEQNPIY) the chain is on the extracellular side. A helical transmembrane segment spans residues 93 to 109 (WARYADWLFTTPLLLLD). Topologically, residues 110-120 (LALLVDADQGT) are cytoplasmic. A helical transmembrane segment spans residues 121–140 (ILALVGADGIMIGTGLVGAL). Topologically, residues 141-147 (TKVYSYR) are extracellular. Residues 148-167 (FVWWAISTAAMLYILYVLFF) traverse the membrane as a helical segment. Over 168 to 185 (GFTSKAESMRPEVASTFK) the chain is Cytoplasmic. A helical membrane pass occupies residues 186 to 204 (VLRNVTVVLWSAYPVVWLI). Topologically, residues 205 to 216 (GSEGAGIVPLNI) are extracellular. A helical membrane pass occupies residues 217–236 (ETLLFMVLDVSAKVGFGLIL). At Lys-229 the chain carries N6-(retinylidene)lysine. Topologically, residues 237–262 (LRSRAIFGEAEAPEPSAGDGAAATSD) are cytoplasmic.

In terms of assembly, homotrimer. In terms of processing, the covalent binding of retinal to the apoprotein, bacterioopsin, generates bacteriorhodopsin.

It localises to the cell membrane. In terms of biological role, light-driven proton pump. This Halobacterium salinarum (strain ATCC 700922 / JCM 11081 / NRC-1) (Halobacterium halobium) protein is Bacteriorhodopsin (bop).